A 417-amino-acid chain; its full sequence is MTRLDSIERAVADIAAGKAVVVVDDEDRENEGDLIFAAEKATPELVAFMVRYTSGYLCVPLAGEDCDRLGLLPQYAVNQDKHGTAYTVTVDAKNGIGTGISASDRAATMRLLADAASTADDFTKPGHVVPLRAKDGGVLRRPGHTEASVDLAKLAGLRPAAVICEIVSQKDEGAMAQTEELRVFADEHNLALVSIADLIEWRRKHEKHVQRIAEARIPTQHGEFRAVGYTSIYDDVEHVALVLGDISGPDGDGNDVLVRVHSECLTGDVFGSRRCDCGPQLDAAMEMVAKEGRGIVLYMRGHEGRGIGLMHKLQAYQLQDAGEDTVDANLKLGLPADARDYGLGAQILVDLGVKSMRLLTNNPAKRVGLDGYGLHIIERVPLPVRANSENIRYLRTKRDRMGHDLADLDDHPEADGA.

A DHBP synthase region spans residues 1–204 (MTRLDSIERA…IADLIEWRRK (204 aa)). D-ribulose 5-phosphate-binding positions include 28 to 29 (RE), Asp33, 141 to 145 (RPGHT), and Glu165. Glu29 serves as a coordination point for Mg(2+). His144 contacts Mg(2+). Positions 205 to 417 (HEKHVQRIAE…LDDHPEADGA (213 aa)) are GTP cyclohydrolase II. 259–263 (RVHSE) is a GTP binding site. Zn(2+)-binding residues include Cys264, Cys275, and Cys277. Residues Gln280, 303-305 (EGR), and Thr325 each bind GTP. The active-site Proton acceptor; for GTP cyclohydrolase activity is the Asp337. Arg339 serves as the catalytic Nucleophile; for GTP cyclohydrolase activity. GTP is bound by residues Thr360 and Lys365.

It in the N-terminal section; belongs to the DHBP synthase family. This sequence in the C-terminal section; belongs to the GTP cyclohydrolase II family. Mg(2+) is required as a cofactor. Requires Mn(2+) as cofactor. The cofactor is Zn(2+).

It carries out the reaction D-ribulose 5-phosphate = (2S)-2-hydroxy-3-oxobutyl phosphate + formate + H(+). The catalysed reaction is GTP + 4 H2O = 2,5-diamino-6-hydroxy-4-(5-phosphoribosylamino)-pyrimidine + formate + 2 phosphate + 3 H(+). It functions in the pathway cofactor biosynthesis; riboflavin biosynthesis; 2-hydroxy-3-oxobutyl phosphate from D-ribulose 5-phosphate: step 1/1. The protein operates within cofactor biosynthesis; riboflavin biosynthesis; 5-amino-6-(D-ribitylamino)uracil from GTP: step 1/4. Its function is as follows. Catalyzes the conversion of D-ribulose 5-phosphate to formate and 3,4-dihydroxy-2-butanone 4-phosphate. Functionally, catalyzes the conversion of GTP to 2,5-diamino-6-ribosylamino-4(3H)-pyrimidinone 5'-phosphate (DARP), formate and pyrophosphate. The chain is Riboflavin biosynthesis protein RibBA from Mycobacteroides abscessus (strain ATCC 19977 / DSM 44196 / CCUG 20993 / CIP 104536 / JCM 13569 / NCTC 13031 / TMC 1543 / L948) (Mycobacterium abscessus).